Reading from the N-terminus, the 292-residue chain is MPTLKDIRIRLKGIKSTQQVTKAMKMVAAAKLRRAQDRAIQARPYAGKLKEMLASLSTKVDTSLNPLLSPREEVNKVLVVLVTSDRGLCGGFNANIMKLAQRVIHEDYAAQHAKGAVTMICAGTKGSDFFRKRGYNVTKAYPGVFQNLDFSSAKEIAELASQMYLKGEADKVILVYNEFKSVLAPNLRTEQLLPIAPEEGTEEAAGSEYLYEPSPEAIIDELVPKHLNTQVWRVMLESNAAEQAARMAAMDSATENAKELIRVLNISYNRARQAAITKELSEIVAGADALKQ.

Belongs to the ATPase gamma chain family. In terms of assembly, F-type ATPases have 2 components, CF(1) - the catalytic core - and CF(0) - the membrane proton channel. CF(1) has five subunits: alpha(3), beta(3), gamma(1), delta(1), epsilon(1). CF(0) has three main subunits: a, b and c.

The protein localises to the cell inner membrane. Its function is as follows. Produces ATP from ADP in the presence of a proton gradient across the membrane. The gamma chain is believed to be important in regulating ATPase activity and the flow of protons through the CF(0) complex. This chain is ATP synthase gamma chain, found in Chlorobaculum parvum (strain DSM 263 / NCIMB 8327) (Chlorobium vibrioforme subsp. thiosulfatophilum).